The following is a 436-amino-acid chain: GTPase Der (436 aa).

EngA-type G domains are found at residues 4–167 and 175–351; these read PTVA…PTEA and IKFS…QSQN. GTP-binding positions include 10–17, 57–61, 119–122, 181–188, 229–233, and 294–297; these read GRPNVGKS, DTGGI, NKVD, DTAGM, and NKWD. The KH-like domain occupies 352 to 436; it reads TRIPSAVLND…PIRLIARKRK (85 aa).

It belongs to the TRAFAC class TrmE-Era-EngA-EngB-Septin-like GTPase superfamily. EngA (Der) GTPase family. In terms of assembly, associates with the 50S ribosomal subunit.

GTPase that plays an essential role in the late steps of ribosome biogenesis. This Streptococcus mutans serotype c (strain ATCC 700610 / UA159) protein is GTPase Der.